A 208-amino-acid polypeptide reads, in one-letter code: Ribosomal RNA small subunit methyltransferase G (208 aa).

S-adenosyl-L-methionine-binding positions include G75, L80, 126–127 (VE), and R141.

This sequence belongs to the methyltransferase superfamily. RNA methyltransferase RsmG family.

It is found in the cytoplasm. It carries out the reaction guanosine(527) in 16S rRNA + S-adenosyl-L-methionine = N(7)-methylguanosine(527) in 16S rRNA + S-adenosyl-L-homocysteine. Specifically methylates the N7 position of guanine in position 527 of 16S rRNA. This Marinomonas sp. (strain MWYL1) protein is Ribosomal RNA small subunit methyltransferase G.